The following is a 383-amino-acid chain: S-adenosylmethionine synthase (383 aa).

ATP is bound at residue His-15. Residue Asp-17 coordinates Mg(2+). Residue Glu-43 coordinates K(+). 2 residues coordinate L-methionine: Glu-56 and Gln-99. Positions 99–109 (QSPDINQGVDR) are flexible loop. ATP contacts are provided by residues 164-166 (DAK), 230-231 (RF), Asp-239, 245-246 (RK), Ala-262, and Lys-266. An L-methionine-binding site is contributed by Asp-239. Residue Lys-270 participates in L-methionine binding.

The protein belongs to the AdoMet synthase family. In terms of assembly, homotetramer; dimer of dimers. It depends on Mg(2+) as a cofactor. The cofactor is K(+).

It is found in the cytoplasm. It carries out the reaction L-methionine + ATP + H2O = S-adenosyl-L-methionine + phosphate + diphosphate. Its pathway is amino-acid biosynthesis; S-adenosyl-L-methionine biosynthesis; S-adenosyl-L-methionine from L-methionine: step 1/1. In terms of biological role, catalyzes the formation of S-adenosylmethionine (AdoMet) from methionine and ATP. The overall synthetic reaction is composed of two sequential steps, AdoMet formation and the subsequent tripolyphosphate hydrolysis which occurs prior to release of AdoMet from the enzyme. This Shewanella putrefaciens (strain CN-32 / ATCC BAA-453) protein is S-adenosylmethionine synthase.